The following is a 316-amino-acid chain: MTNFKLKIASRRSKLAMVQTLWVKDQLEKNIPNLEVSIEAMATQGDKILDVALAKIGDKGLFTKELEAQMLVGHADIAVHSLKDLPTNLPNGLKLGCITKREDPADALVVNKKNDCYKLENLPEGSIVGTSSLRRLAQLRNKYPHLVFKDIRGNVITRIEKLDAGEFDCIILAAAGLKRLGFESRIHQIIPSEVSLHAVGQGALGIECKSDDKKVLEIISILEDKPTCQRCLAERAFLRELEGGCQVPIGVNSKIQNEQLCLTGMVASLDGERLIKDQYIGDINDPEEVGKELAKKLKQQGAEEILSEIFKKFREK.

An S-(dipyrrolylmethanemethyl)cysteine modification is found at cysteine 245.

It belongs to the HMBS family. As to quaternary structure, monomer. Dipyrromethane is required as a cofactor.

The enzyme catalyses 4 porphobilinogen + H2O = hydroxymethylbilane + 4 NH4(+). The protein operates within porphyrin-containing compound metabolism; protoporphyrin-IX biosynthesis; coproporphyrinogen-III from 5-aminolevulinate: step 2/4. It functions in the pathway porphyrin-containing compound metabolism; chlorophyll biosynthesis. Its function is as follows. Tetrapolymerization of the monopyrrole PBG into the hydroxymethylbilane pre-uroporphyrinogen in several discrete steps. The chain is Porphobilinogen deaminase from Prochlorococcus marinus (strain AS9601).